We begin with the raw amino-acid sequence, 423 residues long: Galactosylceramide sulfotransferase (423 aa).

The Cytoplasmic segment spans residues 1 to 14 (MLPPQKKPWESMAK). The chain crosses the membrane as a helical; Signal-anchor for type II membrane protein span at residues 15–35 (GLVLGALFTSFLLLVYSYAVP). The Lumenal portion of the chain corresponds to 36 to 423 (PLHAGLASTT…WKFIRDFLRW (388 aa)). 2 N-linked (GlcNAc...) asparagine glycosylation sites follow: Asn-66 and Asn-312.

Belongs to the galactose-3-O-sulfotransferase family. Expressed in kidney proximal tubule, gastric mucosa and adenocarcinoma. Highly expressed in renal cell carcinoma cell lines.

It is found in the golgi apparatus membrane. The enzyme catalyses a beta-D-galactosyl-(1&lt;-&gt;1')-N-acylsphing-4-enine + 3'-phosphoadenylyl sulfate = an N-acyl-1-beta-D-(3-O-sulfo)-galactosyl-sphing-4-enine + adenosine 3',5'-bisphosphate + H(+). It carries out the reaction a 1-O-alkyl-2-acyl-3-O-(beta-D-galactosyl)-sn-glycerol + 3'-phosphoadenylyl sulfate = a 1-O-alkyl-2-acyl-3-(beta-D-3-sulfogalactosyl)-sn-glycerol + adenosine 3',5'-bisphosphate + H(+). The catalysed reaction is a beta-D-Gal-(1&lt;-&gt;1')-ceramide + 3'-phosphoadenylyl sulfate = 1-(3-O-sulfo-beta-D-galactosyl)-ceramide + adenosine 3',5'-bisphosphate + H(+). It catalyses the reaction a 1,2-diacyl-3-O-(beta-D-galactosyl)-sn-glycerol + 3'-phosphoadenylyl sulfate = 1,2-diacyl-3-(3-O-sulfo-beta-D-galactosyl)-sn-glycerol + adenosine 3',5'-bisphosphate + H(+). The enzyme catalyses a beta-D-Gal-(1-&gt;4)-beta-D-Glc-(1&lt;-&gt;1)-Cer(d18:1(4E)) + 3'-phosphoadenylyl sulfate = beta-D-3-sulfogalactosyl-(1-&gt;4)-beta-D-glucosyl-(1&lt;-&gt;1')-N-acylsphing-4-enine + adenosine 3',5'-bisphosphate + H(+). It participates in lipid metabolism; sphingolipid metabolism. Its function is as follows. Catalyzes the transfer of a sulfate group to position 3 of non-reducing beta-galactosyl residues in glycerolipids and sphingolipids, therefore participates in the biosynthesis of sulfoglycolipids. Catalyzes the synthesis of galactosylceramide sulfate (sulfatide), a major lipid component of the myelin sheath and of monogalactosylalkylacylglycerol sulfate (seminolipid), present in spermatocytes. Seems to prefer beta-glycosides at the non-reducing termini of sugar chains attached to a lipid moiety. Also acts on lactosylceramide, galactosyl 1-alkyl-2-sn-glycerol and galactosyl diacylglycerol (in vitro). The protein is Galactosylceramide sulfotransferase of Homo sapiens (Human).